A 193-amino-acid chain; its full sequence is UPF0397 protein PA0141 (193 aa).

The next 5 membrane-spanning stretches (helical) occupy residues 11-31, 43-63, 69-89, 109-129, and 147-167; these read VTIAINTAIYVILSCFASIPI, FLVFVAVLFGSKVGLSVGLLG, FFLFGNVYFNWIVCSGLLGFL, ILFFWLYQVFVNVLVFGLIAP, and GFLVVLSNILSYSLFGIFLMS.

The protein belongs to the UPF0397 family.

The protein resides in the cell membrane. In Phytoplasma australiense, this protein is UPF0397 protein PA0141.